The primary structure comprises 515 residues: Bifunctional purine biosynthesis protein PurH (515 aa).

Residues 1–145 enclose the MGS-like domain; sequence MTKRALISVS…KNHASVTVVV (145 aa).

It belongs to the PurH family.

It catalyses the reaction (6R)-10-formyltetrahydrofolate + 5-amino-1-(5-phospho-beta-D-ribosyl)imidazole-4-carboxamide = 5-formamido-1-(5-phospho-D-ribosyl)imidazole-4-carboxamide + (6S)-5,6,7,8-tetrahydrofolate. The catalysed reaction is IMP + H2O = 5-formamido-1-(5-phospho-D-ribosyl)imidazole-4-carboxamide. Its pathway is purine metabolism; IMP biosynthesis via de novo pathway; 5-formamido-1-(5-phospho-D-ribosyl)imidazole-4-carboxamide from 5-amino-1-(5-phospho-D-ribosyl)imidazole-4-carboxamide (10-formyl THF route): step 1/1. The protein operates within purine metabolism; IMP biosynthesis via de novo pathway; IMP from 5-formamido-1-(5-phospho-D-ribosyl)imidazole-4-carboxamide: step 1/1. The protein is Bifunctional purine biosynthesis protein PurH of Streptococcus thermophilus (strain ATCC BAA-491 / LMD-9).